A 1333-amino-acid polypeptide reads, in one-letter code: DNA-directed RNA polymerase subunit beta' (1333 aa).

Residues Cys-60, Cys-62, Cys-75, and Cys-78 each coordinate Zn(2+). Mg(2+)-binding residues include Asp-535, Asp-537, and Asp-539. The Zn(2+) site is built by Cys-901, Cys-983, Cys-990, and Cys-993.

This sequence belongs to the RNA polymerase beta' chain family. As to quaternary structure, the RNAP catalytic core consists of 2 alpha, 1 beta, 1 beta' and 1 omega subunit. When a sigma factor is associated with the core the holoenzyme is formed, which can initiate transcription. Mg(2+) is required as a cofactor. The cofactor is Zn(2+).

The enzyme catalyses RNA(n) + a ribonucleoside 5'-triphosphate = RNA(n+1) + diphosphate. DNA-dependent RNA polymerase catalyzes the transcription of DNA into RNA using the four ribonucleoside triphosphates as substrates. In Corynebacterium glutamicum (strain R), this protein is DNA-directed RNA polymerase subunit beta'.